Here is a 358-residue protein sequence, read N- to C-terminus: Fructose-bisphosphate aldolase 5, cytosolic (358 aa).

S2 bears the N-acetylserine mark. R39 is a substrate binding site. The residue at position 68 (C68) is an S-glutathionyl cysteine; transient. Residue C173 is modified to S-glutathionyl cysteine; transient; alternate. C173 is subject to S-nitrosocysteine; transient; alternate. E183 acts as the Proton acceptor in catalysis. K225 acts as the Schiff-base intermediate with dihydroxyacetone-P in catalysis. Residues 266–268 (SGG) and R298 contribute to the substrate site. S350 bears the Phosphoserine mark.

The protein belongs to the class I fructose-bisphosphate aldolase family. In terms of assembly, homotetramer. Interacts with TRX3. In terms of processing, S-glutathionylated at Cys-68 and Cys-173. Post-translationally, S-nitrosylated at Cys-173. Expressed in rosette leaves and cauline leaves.

It is found in the cytoplasm. The protein localises to the cytosol. It catalyses the reaction beta-D-fructose 1,6-bisphosphate = D-glyceraldehyde 3-phosphate + dihydroxyacetone phosphate. The protein operates within carbohydrate degradation; glycolysis; D-glyceraldehyde 3-phosphate and glycerone phosphate from D-glucose: step 4/4. Functionally, fructose-bisphosphate aldolase that plays a key role in glycolysis and gluconeogenesis. This is Fructose-bisphosphate aldolase 5, cytosolic from Arabidopsis thaliana (Mouse-ear cress).